Consider the following 198-residue polypeptide: Na(+)-translocating NADH-quinone reductase subunit E (198 aa).

A run of 6 helical transmembrane segments spans residues 11-31, 39-59, 77-97, 110-130, 140-160, and 176-196; these read SIFI…FLAV, FGLG…NNLV, FLNF…LEMV, GIFL…SFMV, IVYG…LAGI, and LGIT…FSGV.

Belongs to the NqrDE/RnfAE family. Composed of six subunits; NqrA, NqrB, NqrC, NqrD, NqrE and NqrF. The N-terminus is blocked.

The protein resides in the cell inner membrane. It carries out the reaction a ubiquinone + n Na(+)(in) + NADH + H(+) = a ubiquinol + n Na(+)(out) + NAD(+). With respect to regulation, this reaction is tightly coupled to the Na(+) pumping activity and specifically requires Na(+) for activity. Inhibited by korormicin and 2-N-heptyl-4-hydroxyquinoline N-oxide (HQNO). Its function is as follows. NQR complex catalyzes the reduction of ubiquinone-1 to ubiquinol by two successive reactions, coupled with the transport of Na(+) ions from the cytoplasm to the periplasm. NqrA to NqrE are probably involved in the second step, the conversion of ubisemiquinone to ubiquinol. The chain is Na(+)-translocating NADH-quinone reductase subunit E from Vibrio alginolyticus.